The primary structure comprises 181 residues: Protein GrpE (181 aa).

A compositionally biased stretch (acidic residues) spans 1 to 24; sequence MSEENIGENEVETPETEPSAEAEV. A disordered region spans residues 1 to 26; the sequence is MSEENIGENEVETPETEPSAEAEVES.

It belongs to the GrpE family. Homodimer.

The protein resides in the cytoplasm. Functionally, participates actively in the response to hyperosmotic and heat shock by preventing the aggregation of stress-denatured proteins, in association with DnaK and GrpE. It is the nucleotide exchange factor for DnaK and may function as a thermosensor. Unfolded proteins bind initially to DnaJ; upon interaction with the DnaJ-bound protein, DnaK hydrolyzes its bound ATP, resulting in the formation of a stable complex. GrpE releases ADP from DnaK; ATP binding to DnaK triggers the release of the substrate protein, thus completing the reaction cycle. Several rounds of ATP-dependent interactions between DnaJ, DnaK and GrpE are required for fully efficient folding. This chain is Protein GrpE, found in Rhizorhabdus wittichii (strain DSM 6014 / CCUG 31198 / JCM 15750 / NBRC 105917 / EY 4224 / RW1) (Sphingomonas wittichii).